The sequence spans 377 residues: Chaperone protein DnaJ (377 aa).

The region spanning 5 to 70 is the J domain; sequence DYYEILGVSK…QKRAAYDQYG (66 aa). The segment at 132–210 adopts a CR-type zinc-finger fold; that stretch reads GVTKEIRIPT…CHGHGRVEKT (79 aa). Cys145, Cys148, Cys162, Cys165, Cys184, Cys187, Cys198, and Cys201 together coordinate Zn(2+). CXXCXGXG motif repeat units lie at residues 145–152, 162–169, 184–191, and 198–205; these read CDVCHGSG, CPTCHGAG, CPHCQGRG, and CNKCHGHG.

Belongs to the DnaJ family. Homodimer. Zn(2+) is required as a cofactor.

It is found in the cytoplasm. Participates actively in the response to hyperosmotic and heat shock by preventing the aggregation of stress-denatured proteins and by disaggregating proteins, also in an autonomous, DnaK-independent fashion. Unfolded proteins bind initially to DnaJ; upon interaction with the DnaJ-bound protein, DnaK hydrolyzes its bound ATP, resulting in the formation of a stable complex. GrpE releases ADP from DnaK; ATP binding to DnaK triggers the release of the substrate protein, thus completing the reaction cycle. Several rounds of ATP-dependent interactions between DnaJ, DnaK and GrpE are required for fully efficient folding. Also involved, together with DnaK and GrpE, in the DNA replication of plasmids through activation of initiation proteins. This chain is Chaperone protein DnaJ, found in Klebsiella pneumoniae subsp. pneumoniae (strain ATCC 700721 / MGH 78578).